Consider the following 81-residue polypeptide: Tissue- and phase-specific nuclear protein (81 aa).

In terms of tissue distribution, expressed in oviduct, where expression levels are higher in uterine sections than in tuba sections. No expression detected in small intestine and liver (at protein level).

It localises to the nucleus. The protein is Tissue- and phase-specific nuclear protein of Podarcis siculus (Italian wall lizard).